Consider the following 221-residue polypeptide: Ras-related protein Rab-27A (221 aa).

S2 bears the N-acetylserine mark. Position 2 is a phosphoserine (S2). 16–24 (GDSGVGKTS) contributes to the GTP binding site. The Effector region motif lies at 38 to 46 (FITTVGIDF). Residues 74–78 (DTAGQ), 133–136 (NKSD), and 163–165 (SAA) each bind GTP. C123 and C188 are oxidised to a cystine. 2 S-geranylgeranyl cysteine lipidation sites follow: C219 and C221. Position 221 is a cysteine methyl ester (C221).

This sequence belongs to the small GTPase superfamily. Rab family. Binds SYTL1, SLAC2B, MYRIP, SYTL3, SYTL4 and SYTL5. Interacts with RPH3A and RPH3A. Binds MLPH and SYTL2. Interacts with UNC13D. Does not interact with the BLOC-3 complex (heterodimer of HPS1 and HPS4). Interacts (GDP-bound form preferentially) with DENND10. Found in all the examined tissues except in brain. Low expression was found in thymus, kidney, muscle and placenta. Detected in melanocytes, and in most tumor cell lines examined. Expressed in cytotoxic T-lymphocytes (CTL) and mast cells.

It localises to the membrane. Its subcellular location is the melanosome. The protein resides in the late endosome. It is found in the lysosome. The enzyme catalyses GTP + H2O = GDP + phosphate + H(+). With respect to regulation, regulated by guanine nucleotide exchange factors (GEFs) which promote the exchange of bound GDP for free GTP, GTPase activating proteins (GAPs) which increase the GTP hydrolysis activity, and GDP dissociation inhibitors which inhibit the dissociation of the nucleotide from the GTPase. Activated by GEFs such as DENND10. In terms of biological role, small GTPase which cycles between active GTP-bound and inactive GDP-bound states. In its active state, binds to a variety of effector proteins to regulate homeostasis of late endocytic pathway, including endosomal positioning, maturation and secretion. Plays a role in cytotoxic granule exocytosis in lymphocytes. Required for both granule maturation and granule docking and priming at the immunologic synapse. In Homo sapiens (Human), this protein is Ras-related protein Rab-27A (RAB27A).